Consider the following 141-residue polypeptide: Hemoglobin subunit alpha (141 aa).

In terms of domain architecture, Globin spans 1 to 141 (VLSPADKTNI…VSTVLVSKYR (141 aa)). Position 3 is a phosphoserine (S3). N6-succinyllysine is present on K7. T8 is modified (phosphothreonine). K11 is subject to N6-succinyllysine. K16 is modified (N6-acetyllysine; alternate). K16 carries the post-translational modification N6-succinyllysine; alternate. Residue Y24 is modified to Phosphotyrosine. The residue at position 35 (S35) is a Phosphoserine. N6-succinyllysine is present on K40. Position 49 is a phosphoserine (S49). An O2-binding site is contributed by H58. H87 provides a ligand contact to heme b. S102 carries the post-translational modification Phosphoserine. T108 carries the post-translational modification Phosphothreonine. A phosphoserine mark is found at S124 and S131. At T134 the chain carries Phosphothreonine. S138 is subject to Phosphoserine.

Belongs to the globin family. As to quaternary structure, heterotetramer of two alpha chains and two beta chains. In terms of tissue distribution, red blood cells.

Involved in oxygen transport from the lung to the various peripheral tissues. Functionally, hemopressin acts as an antagonist peptide of the cannabinoid receptor CNR1. Hemopressin-binding efficiently blocks cannabinoid receptor CNR1 and subsequent signaling. The chain is Hemoglobin subunit alpha (HBA) from Myotis velifer (Mouse-eared bat).